The chain runs to 420 residues: Glucose-1-phosphate adenylyltransferase (420 aa).

Alpha-D-glucose 1-phosphate contacts are provided by residues Y97, G162, 177-178, and S188; that span reads EK.

It belongs to the bacterial/plant glucose-1-phosphate adenylyltransferase family. As to quaternary structure, homotetramer.

It carries out the reaction alpha-D-glucose 1-phosphate + ATP + H(+) = ADP-alpha-D-glucose + diphosphate. It participates in glycan biosynthesis; glycogen biosynthesis. Its function is as follows. Involved in the biosynthesis of ADP-glucose, a building block required for the elongation reactions to produce glycogen. Catalyzes the reaction between ATP and alpha-D-glucose 1-phosphate (G1P) to produce pyrophosphate and ADP-Glc. The polypeptide is Glucose-1-phosphate adenylyltransferase (Pseudothermotoga lettingae (strain ATCC BAA-301 / DSM 14385 / NBRC 107922 / TMO) (Thermotoga lettingae)).